A 498-amino-acid chain; its full sequence is Pyridine nucleotide-disulfide oxidoreductase domain-containing protein 1 (498 aa).

Met1 bears the N-acetylmethionine mark.

Belongs to the class-I pyridine nucleotide-disulfide oxidoreductase family. PYROXD1 subfamily. It depends on FAD as a cofactor.

Its subcellular location is the nucleus. The protein resides in the cytoplasm. It is found in the myofibril. It localises to the sarcomere. Its function is as follows. Probable FAD-dependent oxidoreductase; involved in the cellular oxidative stress response. Required for normal sarcomere structure and muscle fiber integrity. The polypeptide is Pyridine nucleotide-disulfide oxidoreductase domain-containing protein 1 (Pyroxd1) (Rattus norvegicus (Rat)).